The following is a 944-amino-acid chain: Translation initiation factor IF-2 (944 aa).

Disordered regions lie at residues S50–K91 and K114–T349. Basic and acidic residues-rich tracts occupy residues E75 to R86, V124 to D157, A164 to K185, and K199 to R233. Polar residues predominate over residues S267–A280. Basic and acidic residues predominate over residues S286–R307. Composition is skewed to polar residues over residues N317 to Q331 and Y338 to A348. The tr-type G domain occupies E443–K614. The G1 stretch occupies residues G452–T459. Residue G452–T459 participates in GTP binding. The interval G477 to H481 is G2. The interval D498 to G501 is G3. Residues D498–H502 and N552–D555 contribute to the GTP site. The segment at N552 to D555 is G4. The interval S590 to K592 is G5.

Belongs to the TRAFAC class translation factor GTPase superfamily. Classic translation factor GTPase family. IF-2 subfamily.

It is found in the cytoplasm. Functionally, one of the essential components for the initiation of protein synthesis. Protects formylmethionyl-tRNA from spontaneous hydrolysis and promotes its binding to the 30S ribosomal subunits. Also involved in the hydrolysis of GTP during the formation of the 70S ribosomal complex. In Lactococcus lactis subsp. lactis (strain IL1403) (Streptococcus lactis), this protein is Translation initiation factor IF-2 (infB).